A 52-amino-acid polypeptide reads, in one-letter code: Defensin-like protein 2B (52 aa).

Intrachain disulfides connect cysteine 4–cysteine 52, cysteine 16–cysteine 37, cysteine 22–cysteine 46, and cysteine 26–cysteine 48.

As to quaternary structure, forms oligomers in its native state.

Functionally, possesses antifungal activity sensitive to inorganic cations. The chain is Defensin-like protein 2B from Sinapis alba (White mustard).